The chain runs to 396 residues: Acetate kinase (396 aa).

Asn-8 is a binding site for Mg(2+). ATP is bound at residue Lys-15. Arg-89 contributes to the substrate binding site. Asp-146 functions as the Proton donor/acceptor in the catalytic mechanism. Residues 206–210 (HIGNG), 283–285 (DMR), and 331–335 (GVGEN) contribute to the ATP site. Residue Glu-383 coordinates Mg(2+).

Belongs to the acetokinase family. In terms of assembly, homodimer. Requires Mg(2+) as cofactor. The cofactor is Mn(2+).

The protein resides in the cytoplasm. It catalyses the reaction acetate + ATP = acetyl phosphate + ADP. Its pathway is metabolic intermediate biosynthesis; acetyl-CoA biosynthesis; acetyl-CoA from acetate: step 1/2. Functionally, catalyzes the formation of acetyl phosphate from acetate and ATP. Can also catalyze the reverse reaction. The protein is Acetate kinase of Streptococcus pneumoniae serotype 2 (strain D39 / NCTC 7466).